The following is a 423-amino-acid chain: Histidine--tRNA ligase (423 aa).

The protein belongs to the class-II aminoacyl-tRNA synthetase family. In terms of assembly, homodimer.

Its subcellular location is the cytoplasm. The enzyme catalyses tRNA(His) + L-histidine + ATP = L-histidyl-tRNA(His) + AMP + diphosphate + H(+). The polypeptide is Histidine--tRNA ligase (Actinobacillus pleuropneumoniae serotype 7 (strain AP76)).